We begin with the raw amino-acid sequence, 185 residues long: Protein FAM219A (185 aa).

Residue M1 is modified to N-acetylmethionine. A disordered region spans residues 1-131 (MMEEIDRFQV…SRYSSSGYSS (131 aa)). S47 bears the Phosphoserine mark. Residues 52–61 (KLEKQRELAR) are compositionally biased toward basic and acidic residues. A compositionally biased stretch (polar residues) spans 66-80 (KNGSMGSPVNQQPKK). S72 and S102 each carry phosphoserine. At T113 the chain carries Phosphothreonine. Residues S115 and S122 each carry the phosphoserine modification. Residues 122 to 131 (SRYSSSGYSS) are compositionally biased toward low complexity.

The protein belongs to the FAM219 family.

In Homo sapiens (Human), this protein is Protein FAM219A (FAM219A).